The following is a 438-amino-acid chain: ATP-dependent protease ATPase subunit HslU (438 aa).

Residues Ile18, 60 to 65 (GVGKTE), Asp251, Glu316, and Arg388 each bind ATP.

The protein belongs to the ClpX chaperone family. HslU subfamily. As to quaternary structure, a double ring-shaped homohexamer of HslV is capped on each side by a ring-shaped HslU homohexamer. The assembly of the HslU/HslV complex is dependent on binding of ATP.

It is found in the cytoplasm. In terms of biological role, ATPase subunit of a proteasome-like degradation complex; this subunit has chaperone activity. The binding of ATP and its subsequent hydrolysis by HslU are essential for unfolding of protein substrates subsequently hydrolyzed by HslV. HslU recognizes the N-terminal part of its protein substrates and unfolds these before they are guided to HslV for hydrolysis. This Jannaschia sp. (strain CCS1) protein is ATP-dependent protease ATPase subunit HslU.